The sequence spans 236 residues: 5'-methylthioadenosine/S-adenosylhomocysteine nucleosidase (236 aa).

The active-site Proton acceptor is glutamate 12. Residues glycine 78, methionine 153, and 174–175 (ME) contribute to the substrate site. Aspartate 198 serves as the catalytic Proton donor.

This sequence belongs to the PNP/UDP phosphorylase family. MtnN subfamily.

It carries out the reaction S-adenosyl-L-homocysteine + H2O = S-(5-deoxy-D-ribos-5-yl)-L-homocysteine + adenine. The enzyme catalyses S-methyl-5'-thioadenosine + H2O = 5-(methylsulfanyl)-D-ribose + adenine. The catalysed reaction is 5'-deoxyadenosine + H2O = 5-deoxy-D-ribose + adenine. Its pathway is amino-acid biosynthesis; L-methionine biosynthesis via salvage pathway; S-methyl-5-thio-alpha-D-ribose 1-phosphate from S-methyl-5'-thioadenosine (hydrolase route): step 1/2. In terms of biological role, catalyzes the irreversible cleavage of the glycosidic bond in both 5'-methylthioadenosine (MTA) and S-adenosylhomocysteine (SAH/AdoHcy) to adenine and the corresponding thioribose, 5'-methylthioribose and S-ribosylhomocysteine, respectively. Also cleaves 5'-deoxyadenosine, a toxic by-product of radical S-adenosylmethionine (SAM) enzymes, into 5-deoxyribose and adenine. This chain is 5'-methylthioadenosine/S-adenosylhomocysteine nucleosidase, found in Geobacillus thermodenitrificans (strain NG80-2).